A 134-amino-acid chain; its full sequence is DNA-binding protein H-NS homolog (134 aa).

The interval 106-134 is disordered; it reads HKTWTGQGRTPRPIQNALNKGKSLSDFEI. The DNA-binding element occupies 112 to 117; that stretch reads QGRTPR.

This sequence belongs to the histone-like protein H-NS family. In terms of assembly, homodimer that oligomerizes on DNA into higher-order complexes that form bridges between disparate regions of DNA compacting it.

Its subcellular location is the cytoplasm. It is found in the nucleoid. Its function is as follows. A DNA-binding protein implicated in transcriptional repression and chromosome organization and compaction. Binds nucleation sites in AT-rich DNA and bridges them, forming higher-order nucleoprotein complexes and condensing the chromosome. As many horizontally transferred genes are AT-rich, it plays a central role in silencing foreign genes. A subset of genes are repressed by H-NS in association with other proteins. In Haemophilus influenzae (strain ATCC 51907 / DSM 11121 / KW20 / Rd), this protein is DNA-binding protein H-NS homolog (hns).